We begin with the raw amino-acid sequence, 160 residues long: Photosystem I reaction center subunit XI (160 aa).

Helical transmembrane passes span 84–104 (LIPALAMVLLATGCLASYGLV) and 125–145 (FAAGFFIGGMGGAFVAYFLLE).

This sequence belongs to the PsaL family.

It is found in the cellular thylakoid membrane. The polypeptide is Photosystem I reaction center subunit XI (Microcystis aeruginosa (strain NIES-843 / IAM M-2473)).